We begin with the raw amino-acid sequence, 679 residues long: uncharacterized protein (679 aa).

Helical transmembrane passes span 23 to 41, 46 to 65, 72 to 90, 94 to 113, 120 to 142, 157 to 179, 362 to 381, 385 to 404, 411 to 433, 438 to 455, 462 to 481, and 496 to 515; these read YALRNTIAMCLALTFAYYL, PYWAMTSAAVVSFPTVGGVI, IAGSLLGATAALIIAGHTL, WLFLFSMAAWIGFCTWACAH, YAFQLSGYTAAIIAFPMVNIVEI, IVGILCGGMMMMILPSTSDGTAL, WSGVRTFCTLTVIGAWSIGA, SGPGALTLAAISCVLYSIVA, SLLMRTLVLLSLFSFVVKFGLMV, LWQFLLFLFPLFVTMQLL, LAGLWGQLIVFMGSFIAVTN, and AKIVGVAISWLAFAILRPGS.

It belongs to the aromatic acid exporter ArAE (TC 2.A.85) family.

The protein localises to the cell membrane. This is an uncharacterized protein from Salmonella typhimurium (strain LT2 / SGSC1412 / ATCC 700720).